The following is a 531-amino-acid chain: GPI alpha-1,2-mannosyltransferase 3 (531 aa).

Residue Asn-84 is glycosylated (N-linked (GlcNAc...) asparagine). 3 helical membrane passes run 99-119, 124-144, and 174-196; these read GLRG…LYLL, VWFL…IADV, and YCAT…LYYY. Asn-204 is a glycosylation site (N-linked (GlcNAc...) asparagine). Transmembrane regions (helical) follow at residues 210 to 230, 249 to 269, 303 to 323, 328 to 348, 350 to 370, and 375 to 395; these read LICV…WIPL, YLPI…IFFG, GVPV…MVTP, ILLV…HKEF, FIYP…SNLK, and AAVG…GLIH. 2 N-linked (GlcNAc...) asparagine glycosylation sites follow: Asn-414 and Asn-476.

Belongs to the glycosyltransferase 22 family. PIGB subfamily.

Its subcellular location is the endoplasmic reticulum membrane. Its pathway is glycolipid biosynthesis; glycosylphosphatidylinositol-anchor biosynthesis. In terms of biological role, alpha-1,2-mannosyltransferase that catalyzes the transfer of the third mannose, via an alpha-1,2 bond, from a dolichol-phosphate-mannose (Dol-P-Man) to an alpha-D-Man-(1-&gt;6)-2-PEtn-alpha-D-Man-(1-&gt;4)-alpha-D-GlcN-(1-&gt;6)-(1-radyl,2-acyl-sn-glycero-3-phospho)-2-acyl-inositol intermediate to generate an alpha-D-Man-(1-&gt;2)-alpha-D-Man-(1-&gt;6)-2-PEtn-alpha-D-Man-(1-&gt;4)-alpha-D-GlcN-(1-&gt;6)-(1-radyl,2-acyl-sn-glycero-3-phospho)-2-acyl-inositol (also termed H6) and participates in the nineth step of the glycosylphosphatidylinositol-anchor biosynthesis. May also add the third mannose to an alpha-D-Man-(1-&gt;6)-alpha-D-Man-(1-&gt;4)-alpha-D-GlcN-(1-&gt;6)-(1-radyl,2-acyl-sn-glycero-3-phospho)-2-acyl-inositol (also termed H3) intermediate generating an alpha-D-Man-(1-&gt;2)-alpha-D-Man-(1-&gt;6)-alpha-D-Man-(1-&gt;4)-alpha-D-GlcN-(1-&gt;6)-(1-radyl,2-acyl-sn-glycero-3-phospho)-2-acyl-inositol (also termed H4). The protein is GPI alpha-1,2-mannosyltransferase 3 of Xenopus laevis (African clawed frog).